Reading from the N-terminus, the 510-residue chain is MEVKDIFSYDWSYLLPEFIILGFATFLSLLDLFAGKRLGKQVIGWLSFLGTVIAAIFVIINMNALNKPYSYMIDMIRIDDYGNAFKLIFLAGTAFAILISLSYLKAGEVQHRGEYYYLLLTGLLGAMVMASSADLITLFVGLELLSLSSYVLVGLRKKSRLSNESAFKYVVSGSIATAVLLFGMSYVYGLAGTTHIYEISFRLAEAGMAGYQFLVYTAFAFLAVGLAFKISAAPNHMWAPDVYQGAPTPVTVFLAVVSKAAGFALIFRVMMISFFNVSDGTGSGRFFFEEGSLYLGLMAAASMIIGNTMALRQTNVKRMMAYSGIAQAGYLLVPFVPPTSLFFSEVIFYLFGYLLVSFGAFAVIMVVSREQETEDLKGFAGLYHRSPVMAIAMSIFLLSLAGIPITVGFFGKFYLFMGTLVVENYWLAAIMIITSVISYYYYFGIIRQMYMRPGTTEAPMVVPKGIWTFILIMAIATVFFGAFPGLVTDYIQIHFNPSFDFGNMLSPSSQ.

14 consecutive transmembrane segments (helical) span residues 14–34 (LLPE…DLFA), 42–62 (VIGW…IINM), 84–104 (AFKL…LSYL), 113–133 (GEYY…ASSA), 135–155 (LITL…LVGL), 170–190 (VVSG…VYGL), 208–228 (MAGY…GLAF), 247–267 (PTPV…ALIF), 286–306 (FFFE…MIIG), 323–343 (SGIA…SLFF), 346–366 (VIFY…VIMV), 390–410 (AIAM…VGFF), 426–446 (WLAA…FGII), and 466–486 (IWTF…FPGL).

Belongs to the complex I subunit 2 family. In terms of assembly, NDH-1 is composed of 14 different subunits. Subunits NuoA, H, J, K, L, M, N constitute the membrane sector of the complex.

It localises to the cell membrane. The catalysed reaction is a quinone + NADH + 5 H(+)(in) = a quinol + NAD(+) + 4 H(+)(out). Its function is as follows. NDH-1 shuttles electrons from NADH, via FMN and iron-sulfur (Fe-S) centers, to quinones in the respiratory chain. The immediate electron acceptor for the enzyme in this species is believed to be a menaquinone. Couples the redox reaction to proton translocation (for every two electrons transferred, four hydrogen ions are translocated across the cytoplasmic membrane), and thus conserves the redox energy in a proton gradient. The protein is NADH-quinone oxidoreductase subunit N of Brevibacillus brevis (strain 47 / JCM 6285 / NBRC 100599).